Consider the following 129-residue polypeptide: Glycine cleavage system H protein (129 aa).

A Lipoyl-binding domain is found at 24–106; it reads LVRVGLSAYA…HGEGWLLVIR (83 aa). Lysine 65 carries the post-translational modification N6-lipoyllysine.

It belongs to the GcvH family. The glycine cleavage system is composed of four proteins: P, T, L and H. The cofactor is (R)-lipoate.

Functionally, the glycine cleavage system catalyzes the degradation of glycine. The H protein shuttles the methylamine group of glycine from the P protein to the T protein. This chain is Glycine cleavage system H protein, found in Synechococcus sp. (strain CC9311).